The following is a 297-amino-acid chain: 4-hydroxy-tetrahydrodipicolinate synthase (297 aa).

Pyruvate is bound at residue Thr-49. Catalysis depends on Tyr-137, which acts as the Proton donor/acceptor. The Schiff-base intermediate with substrate role is filled by Lys-165. Pyruvate is bound at residue Ile-208.

This sequence belongs to the DapA family. As to quaternary structure, homotetramer; dimer of dimers.

The protein resides in the cytoplasm. It catalyses the reaction L-aspartate 4-semialdehyde + pyruvate = (2S,4S)-4-hydroxy-2,3,4,5-tetrahydrodipicolinate + H2O + H(+). It participates in amino-acid biosynthesis; L-lysine biosynthesis via DAP pathway; (S)-tetrahydrodipicolinate from L-aspartate: step 3/4. In terms of biological role, catalyzes the condensation of (S)-aspartate-beta-semialdehyde [(S)-ASA] and pyruvate to 4-hydroxy-tetrahydrodipicolinate (HTPA). The protein is 4-hydroxy-tetrahydrodipicolinate synthase of Gluconacetobacter diazotrophicus (strain ATCC 49037 / DSM 5601 / CCUG 37298 / CIP 103539 / LMG 7603 / PAl5).